A 124-amino-acid polypeptide reads, in one-letter code: Small ribosomal subunit protein uS12 (124 aa).

Residues M1–R30 form a disordered region. A 3-methylthioaspartic acid modification is found at D89. The tract at residues A102–S124 is disordered. Residues K108–G118 show a composition bias toward basic residues.

The protein belongs to the universal ribosomal protein uS12 family. Part of the 30S ribosomal subunit. Contacts proteins S8 and S17. May interact with IF1 in the 30S initiation complex.

Functionally, with S4 and S5 plays an important role in translational accuracy. Interacts with and stabilizes bases of the 16S rRNA that are involved in tRNA selection in the A site and with the mRNA backbone. Located at the interface of the 30S and 50S subunits, it traverses the body of the 30S subunit contacting proteins on the other side and probably holding the rRNA structure together. The combined cluster of proteins S8, S12 and S17 appears to hold together the shoulder and platform of the 30S subunit. The chain is Small ribosomal subunit protein uS12 from Saccharopolyspora erythraea (strain ATCC 11635 / DSM 40517 / JCM 4748 / NBRC 13426 / NCIMB 8594 / NRRL 2338).